Here is a 157-residue protein sequence, read N- to C-terminus: Biotin carboxyl carrier protein of acetyl-CoA carboxylase (157 aa).

Positions 80–156 (YATIVSPMVG…DCGQALMKVE (77 aa)) constitute a Biotinyl-binding domain. At lysine 122 the chain carries N6-biotinyllysine.

It is found in the plastid. Its subcellular location is the chloroplast. The protein operates within lipid metabolism; fatty acid biosynthesis. In terms of biological role, this protein is a component of the acetyl coenzyme A carboxylase complex; first, biotin carboxylase catalyzes the carboxylation of the carrier protein and then the transcarboxylase transfers the carboxyl group to form malonyl-CoA. The sequence is that of Biotin carboxyl carrier protein of acetyl-CoA carboxylase (accB) from Porphyra purpurea (Red seaweed).